The primary structure comprises 500 residues: Zinc finger protein ENHYDROUS (500 aa).

The tract at residues 1 to 42 is disordered; that stretch reads MPVDLDNSSTVSGDASVSSTGNQNLTPKSVGKKKRNLPGMPD. Low complexity predominate over residues 8 to 21; it reads SSTVSGDASVSSTG. At serine 51 the chain carries Phosphoserine. 2 consecutive C2H2-type zinc fingers follow at residues 61-83 and 102-132; these read FVCE…RRGH and YVCP…CRKH. The Nuclear localization signal signature appears at 124–131; that stretch reads IKKHFCRK. A C2H2-type 2; degenerate zinc finger spans residues 137–160; that stretch reads WKCEKCSKKYAVQSDWKAHSKICG. Residues cysteine 139, cysteine 142, histidine 155, cysteine 159, cysteine 166, cysteine 168, histidine 181, and cysteine 185 each contribute to the Zn(2+) site. A CCHC-type 2; atypical zinc finger spans residues 164–187; that stretch reads YKCDCGTLFSRRDSFITHRAFCDA. An SHR-binding region spans residues 174–186; that stretch reads RRDSFITHRAFCD. Positions 196 to 236 are disordered; sequence HTQSKKLYPETVTRKNPEIEQKSPAAVESSPSLPPSSPPSV. Positions 207–216 are enriched in basic and acidic residues; that stretch reads VTRKNPEIEQ.

Interacts with the DELLA proteins (e.g. GAI/RGA2, RGA, RGL1, RGL2 and RGLG3), acting as coactivators. At 3 days post anthesis (DPA), expressed in the chalazal endosperm region. By 6 DPA, expressed in the endosperm and embryo. In fully germinated seed, strongest expression in the root tip and not detected in the cotyledons. In 4-days old seedlings, restricted to the vasculature of the cotyledons, the shoot apical meristem region, and the root tip. By 8 days, restricted to newly emerged leaves.

The protein resides in the nucleus. Functionally, transcription factor promoting the transition to germination by regulating light and hormonal signaling during seed maturation. Acts as a positive regulator of phytochrome and/or gibberellin action. The chain is Zinc finger protein ENHYDROUS from Arabidopsis thaliana (Mouse-ear cress).